A 165-amino-acid chain; its full sequence is Phosphopantetheine adenylyltransferase (165 aa).

S10 lines the substrate pocket. ATP contacts are provided by residues 10–11 (SF) and H18. Substrate is bound by residues K42, L74, and R88. ATP is bound by residues 89–91 (GLR), E99, and 124–130 (YSYLSSS).

Belongs to the bacterial CoaD family. Homohexamer. It depends on Mg(2+) as a cofactor.

Its subcellular location is the cytoplasm. It carries out the reaction (R)-4'-phosphopantetheine + ATP + H(+) = 3'-dephospho-CoA + diphosphate. It functions in the pathway cofactor biosynthesis; coenzyme A biosynthesis; CoA from (R)-pantothenate: step 4/5. Its function is as follows. Reversibly transfers an adenylyl group from ATP to 4'-phosphopantetheine, yielding dephospho-CoA (dPCoA) and pyrophosphate. This is Phosphopantetheine adenylyltransferase from Halalkalibacterium halodurans (strain ATCC BAA-125 / DSM 18197 / FERM 7344 / JCM 9153 / C-125) (Bacillus halodurans).